Reading from the N-terminus, the 133-residue chain is Large ribosomal subunit protein bL17 (133 aa).

The protein belongs to the bacterial ribosomal protein bL17 family. As to quaternary structure, part of the 50S ribosomal subunit. Contacts protein L32.

The protein is Large ribosomal subunit protein bL17 of Ehrlichia chaffeensis (strain ATCC CRL-10679 / Arkansas).